The following is a 677-amino-acid chain: DNA ligase (677 aa).

NAD(+) is bound by residues 34-38, 84-85, and glutamate 118; these read DAQYD and SL. Lysine 120 (N6-AMP-lysine intermediate) is an active-site residue. NAD(+) is bound by residues arginine 141, glutamate 176, lysine 283, and lysine 307. Residues cysteine 403, cysteine 406, cysteine 421, and cysteine 427 each contribute to the Zn(2+) site. In terms of domain architecture, BRCT spans 594–677; the sequence is ETASPISGKT…DLLKTVSNSE (84 aa).

Belongs to the NAD-dependent DNA ligase family. LigA subfamily. Mg(2+) is required as a cofactor. The cofactor is Mn(2+).

The enzyme catalyses NAD(+) + (deoxyribonucleotide)n-3'-hydroxyl + 5'-phospho-(deoxyribonucleotide)m = (deoxyribonucleotide)n+m + AMP + beta-nicotinamide D-nucleotide.. Functionally, DNA ligase that catalyzes the formation of phosphodiester linkages between 5'-phosphoryl and 3'-hydroxyl groups in double-stranded DNA using NAD as a coenzyme and as the energy source for the reaction. It is essential for DNA replication and repair of damaged DNA. This is DNA ligase from Anaplasma phagocytophilum (strain HZ).